A 589-amino-acid polypeptide reads, in one-letter code: Aspartate--tRNA(Asp/Asn) ligase (589 aa).

Glu172 provides a ligand contact to L-aspartate. The tract at residues 196 to 199 (QLFK) is aspartate. Position 218 (Arg218) interacts with L-aspartate. Residues 218–220 (RDE) and Gln227 each bind ATP. L-aspartate is bound at residue His449. Glu483 provides a ligand contact to ATP. Arg490 contacts L-aspartate. Position 535 to 538 (535 to 538 (GVDR)) interacts with ATP.

It belongs to the class-II aminoacyl-tRNA synthetase family. Type 1 subfamily. As to quaternary structure, homodimer.

The protein resides in the cytoplasm. It carries out the reaction tRNA(Asx) + L-aspartate + ATP = L-aspartyl-tRNA(Asx) + AMP + diphosphate. Aspartyl-tRNA synthetase with relaxed tRNA specificity since it is able to aspartylate not only its cognate tRNA(Asp) but also tRNA(Asn). Reaction proceeds in two steps: L-aspartate is first activated by ATP to form Asp-AMP and then transferred to the acceptor end of tRNA(Asp/Asn). The polypeptide is Aspartate--tRNA(Asp/Asn) ligase (Francisella philomiragia subsp. philomiragia (strain ATCC 25017 / CCUG 19701 / FSC 153 / O#319-036)).